The primary structure comprises 107 residues: EPIDERMAL PATTERNING FACTOR-like protein 5 (107 aa).

Residues 1 to 22 form the signal peptide; it reads MGVVLPTLIVYAFLLFFSSSSA. Cystine bridges form between Cys-64/Cys-98, Cys-68/Cys-74, and Cys-71/Cys-100.

Belongs to the plant cysteine rich small secretory peptide family. Epidermal patterning factor subfamily. Interacts with ERECTA. Expressed asymetically in the hypocotyl, on the side proximal to the folded cotyledons at germination. Detected in developing flowers, the chalazal region of ovules and near the root apex, but not in inflorescence stems. Expressed in cotyledons, flowers, adult leaves and fruits.

It is found in the secreted. Its function is as follows. Controls stomatal patterning. Mediates differentiation of stomatal lineage cells to pavement cells and stomatal development inhibition. TMM (AC Q9SSD1) functions to dampen or block CLL1 signaling. Acts as a growth-regulatory ligand for ERECTA family receptors. Promotes fruit growth and fertility. The sequence is that of EPIDERMAL PATTERNING FACTOR-like protein 5 from Arabidopsis thaliana (Mouse-ear cress).